The following is a 453-amino-acid chain: Ribosomal protein uS12 methylthiotransferase RimO (453 aa).

An MTTase N-terminal domain is found at 9-124 (PKVGFVSLGC…VMEAVHTHLP (116 aa)). Residues C18, C54, C83, C155, C159, and C162 each contribute to the [4Fe-4S] cluster site. One can recognise a Radical SAM core domain in the interval 141-382 (LTPKHYAYLK…MEVAERVSAR (242 aa)). The 69-residue stretch at 385–453 (QRKVGKTLRV…ADGHDLWGEV (69 aa)) folds into the TRAM domain.

It belongs to the methylthiotransferase family. RimO subfamily. The cofactor is [4Fe-4S] cluster.

The protein localises to the cytoplasm. It catalyses the reaction L-aspartate(89)-[ribosomal protein uS12]-hydrogen + (sulfur carrier)-SH + AH2 + 2 S-adenosyl-L-methionine = 3-methylsulfanyl-L-aspartate(89)-[ribosomal protein uS12]-hydrogen + (sulfur carrier)-H + 5'-deoxyadenosine + L-methionine + A + S-adenosyl-L-homocysteine + 2 H(+). Catalyzes the methylthiolation of an aspartic acid residue of ribosomal protein uS12. The protein is Ribosomal protein uS12 methylthiotransferase RimO of Ralstonia nicotianae (strain ATCC BAA-1114 / GMI1000) (Ralstonia solanacearum).